Here is a 234-residue protein sequence, read N- to C-terminus: Ribonuclease HII (234 aa).

The 192-residue stretch at 16–207 folds into the RNase H type-2 domain; sequence ALVAGVDEAG…VRRMLTPKAI (192 aa). A divalent metal cation contacts are provided by D22, E23, and D115.

It belongs to the RNase HII family. The cofactor is Mn(2+). Mg(2+) serves as cofactor.

It localises to the cytoplasm. The catalysed reaction is Endonucleolytic cleavage to 5'-phosphomonoester.. In terms of biological role, endonuclease that specifically degrades the RNA of RNA-DNA hybrids. The polypeptide is Ribonuclease HII (Xylella fastidiosa (strain M23)).